The chain runs to 792 residues: Starch synthase 2, chloroplastic/amyloplastic (792 aa).

The transit peptide at 1–55 (MASVAESSFPLLCQIKTQRRINSSTLRHSRVSYHDLPSGSLSFRSRSFVLGHRCK) directs the protein to the chloroplast. The disordered stretch occupies residues 105-295 (IKESTPDLDD…GKDEEKPPPL (191 aa)). The span at 145 to 156 (GSVSPSTYGKSS) shows a compositional bias: polar residues. Over residues 179–192 (SSASVISSSPVTSP) the composition is skewed to low complexity. Positions 221–233 (SVMTSPEKTSDPV) are enriched in polar residues. A compositionally biased stretch (basic and acidic residues) spans 266-275 (KTEKYVEKTP). Lys315 lines the ADP-alpha-D-glucose pocket.

The protein belongs to the glycosyltransferase 1 family. Bacterial/plant glycogen synthase subfamily. As to expression, expressed in roots, leaves and flowers.

The protein resides in the plastid. It localises to the chloroplast. It is found in the amyloplast. The catalysed reaction is [(1-&gt;4)-alpha-D-glucosyl](n) + ADP-alpha-D-glucose = [(1-&gt;4)-alpha-D-glucosyl](n+1) + ADP + H(+). Its pathway is glycan biosynthesis; starch biosynthesis. Involved in the synthesis of glycan chains within amylopectin in leaves. Is required to produce chains with a degree of polymerization of 12 to 25 (DP12-DP25). The chain is Starch synthase 2, chloroplastic/amyloplastic (SS2) from Arabidopsis thaliana (Mouse-ear cress).